A 119-amino-acid chain; its full sequence is MPRVKRGVTARASHKKILDAAKGYRGRRKNVFRVANEAVMKAGQYQYRDRRQRKRQFRALWIARINAAARQHGLTYSVFMNGLSRAEIGVDRKVLSDIAIFDKDAFAKIVDQVKAKLAA.

This sequence belongs to the bacterial ribosomal protein bL20 family.

Binds directly to 23S ribosomal RNA and is necessary for the in vitro assembly process of the 50S ribosomal subunit. It is not involved in the protein synthesizing functions of that subunit. The polypeptide is Large ribosomal subunit protein bL20 (Thiobacillus denitrificans (strain ATCC 25259 / T1)).